The following is a 4138-amino-acid chain: Fumosorinone synthetase (4138 aa).

The Ketosynthase family 3 (KS3) domain maps to 15–455 (PEPIAIVGSA…GTNAHAIIER (441 aa)). Residues C189, H328, and H375 each act as for beta-ketoacyl synthase activity in the active site. The tract at residues 590–921 (VFTGQGAQWP…APDAVSFSTA (332 aa)) is malonyl-CoA:ACP transacylase (MAT) domain. The segment at 990–1133 (HELLGRRAVD…GLIDVHLGPR (144 aa)) is N-terminal hotdog fold. The interval 990-1306 (HELLGRRAVD…GFEVRSVGER (317 aa)) is dehydratase (DH) domain. A PKS/mFAS DH domain is found at 990–1309 (HELLGRRAVD…VRSVGERDAA (320 aa)). H1022 (proton acceptor; for dehydratase activity) is an active-site residue. The interval 1157 to 1309 (LQEIDCEKLY…VRSVGERDAA (153 aa)) is C-terminal hotdog fold. D1216 serves as the catalytic Proton donor; for dehydratase activity. Positions 1456 to 1650 (RFYAEDKGMQ…FSGADHVAHD (195 aa)) are methyltransferase (MT) domain. Residues 2205–2379 (TYLMVGAAGG…AASIIHVGFV (175 aa)) form a ketoreductase (KR) domain region. The Carrier 1 domain occupies 2507–2587 (EAAAAVRRAF…QLSTLAAKLA (81 aa)). At S2547 the chain carries O-(pantetheine 4'-phosphoryl)serine. A disordered region spans residues 2587–2683 (ARQQSPRKEG…TEPKTEDKVS (97 aa)). The segment covering 2610–2621 (TQDKLVDDKEQK) has biased composition (basic and acidic residues). Residues 2622–2643 (VQVTSSLAKADSLTQEMQASAH) are compositionally biased toward polar residues. Residues 2647–2659 (DSATNPTPSSTAS) are compositionally biased toward low complexity. Residues 2664-2675 (SNSQSTRSTSTE) show a composition bias toward polar residues. Residues 2701–3128 (REAPMSAAQA…ASQRVRECAV (428 aa)) are condensation (C) domain. Residues 3162 to 3564 (CQKNSARTAI…DGTLLCFGRI (403 aa)) are adenylation (A) (KR) domain. The Carrier 2 domain maps to 3680 to 3759 (EKMTIQEGEL…GMTRCVLAQR (80 aa)). The residue at position 3719 (S3719) is an O-(pantetheine 4'-phosphoryl)serine. The reductase (RED) domain stretch occupies residues 3813–4045 (LTGATGFLGG…LDFGTVDAVV (233 aa)).

It in the C-terminal section; belongs to the NRP synthetase family.

Functionally, hybrid PKS-NRPS synthetase; part of the gene cluster that mediates the biosynthesis of fumosorinone, a 2-pyridone alkaloid that acts as an inhibitor of protein tyrosine phosphatase 1B which is implicated asa negative regulator of insulin receptor signaling and a potential drug target for the treatment of type II diabetes and other associated metabolic syndromes. The polyketide-amino acid backbone of fumosorinone is first assembled by the PKS-NRPS hybrid fumoS. The PKS modules condense one acetyl-CoA starter unit with 7 malonyl-CoA units, programmed C-methylations occurring after the first 3 and the sixth extensions, and cycles of full reduction occurring after the first 2 extensions. Because fumoS lacks a designated enoyl reductase (ER) domain, the required activity is provided the enoyl reductase fumoC. Upon formation of the polyketide backbone on the thiotemplate, the polyketide is transferred to the NRPS module and linked to tyrosine to produce the acyltetramic acid intermediate called prefumosorinone A. The cytochrome P450 monooxygenase fumoA then probably catalyzes an unprecedented oxidative ring expansion of prefumosorinone A to form prefumosorinone B which contains the 2-pyridone core of fumosorinone. The cytochrome P450 monooxygenase fumoB might hydroxylate the nitrogen of prefumosorinone B, but not the acyltetramic acid prefumosorinone A, to form fumosorinone. In Cordyceps fumosorosea (strain ARSEF 2679) (Isaria fumosorosea), this protein is Fumosorinone synthetase.